The sequence spans 191 residues: dITP/XTP pyrophosphatase (191 aa).

8–13 (SKNQGK) is a binding site for substrate. Positions 38 and 67 each coordinate Mg(2+). The Proton acceptor role is filled by Asp-67. Substrate-binding positions include Ser-68, 146 to 149 (FGYD), Lys-169, and 174 to 175 (HR).

It belongs to the HAM1 NTPase family. Homodimer. Mg(2+) is required as a cofactor.

The enzyme catalyses XTP + H2O = XMP + diphosphate + H(+). It catalyses the reaction dITP + H2O = dIMP + diphosphate + H(+). It carries out the reaction ITP + H2O = IMP + diphosphate + H(+). Its function is as follows. Pyrophosphatase that catalyzes the hydrolysis of nucleoside triphosphates to their monophosphate derivatives, with a high preference for the non-canonical purine nucleotides XTP (xanthosine triphosphate), dITP (deoxyinosine triphosphate) and ITP. Seems to function as a house-cleaning enzyme that removes non-canonical purine nucleotides from the nucleotide pool, thus preventing their incorporation into DNA/RNA and avoiding chromosomal lesions. This is dITP/XTP pyrophosphatase from Prochlorococcus marinus subsp. pastoris (strain CCMP1986 / NIES-2087 / MED4).